Reading from the N-terminus, the 332-residue chain is Glycerol-3-phosphate dehydrogenase [NAD(P)+] (332 aa).

4 residues coordinate NADPH: Ser11, Phe12, Lys32, and Lys106. Sn-glycerol 3-phosphate contacts are provided by Lys106, Gly137, and Ser139. Ala141 contributes to the NADPH binding site. 5 residues coordinate sn-glycerol 3-phosphate: Lys192, Asp245, Ser255, Arg256, and Asn257. Lys192 (proton acceptor) is an active-site residue. An NADPH-binding site is contributed by Arg256. Positions 280 and 282 each coordinate NADPH.

The protein belongs to the NAD-dependent glycerol-3-phosphate dehydrogenase family.

It is found in the cytoplasm. It catalyses the reaction sn-glycerol 3-phosphate + NAD(+) = dihydroxyacetone phosphate + NADH + H(+). The enzyme catalyses sn-glycerol 3-phosphate + NADP(+) = dihydroxyacetone phosphate + NADPH + H(+). Its pathway is membrane lipid metabolism; glycerophospholipid metabolism. Its function is as follows. Catalyzes the reduction of the glycolytic intermediate dihydroxyacetone phosphate (DHAP) to sn-glycerol 3-phosphate (G3P), the key precursor for phospholipid synthesis. The sequence is that of Glycerol-3-phosphate dehydrogenase [NAD(P)+] from Staphylococcus epidermidis (strain ATCC 12228 / FDA PCI 1200).